Here is a 199-residue protein sequence, read N- to C-terminus: Superoxide dismutase [Mn/Fe] 1 (199 aa).

Fe(3+) contacts are provided by His-27, His-81, Asp-161, and His-165. His-27, His-81, Asp-161, and His-165 together coordinate Mn(2+).

Belongs to the iron/manganese superoxide dismutase family. Homodimer. Can also form a heterodimer with SodM. Mn(2+) serves as cofactor. Requires Fe(3+) as cofactor.

The enzyme catalyses 2 superoxide + 2 H(+) = H2O2 + O2. Functionally, destroys superoxide anion radicals which are normally produced within the cells and which are toxic to biological systems. Catalyzes the dismutation of superoxide anion radicals into O2 and H2O2 by successive reduction and oxidation of the transition metal ion at the active site. The polypeptide is Superoxide dismutase [Mn/Fe] 1 (sodA) (Staphylococcus aureus (strain USA300)).